A 124-amino-acid polypeptide reads, in one-letter code: Large ribosomal subunit protein eL22 (124 aa).

Belongs to the eukaryotic ribosomal protein eL22 family. Component of the large ribosomal subunit. Mature ribosomes consist of a small (40S) and a large (60S) subunit. The 40S subunit contains about 32 different proteins and 1 molecule of RNA (18S). The 60S subunit contains 45 different proteins and 3 molecules of RNA (25S, 5.8S and 5S).

It is found in the cytoplasm. Its function is as follows. Component of the ribosome, a large ribonucleoprotein complex responsible for the synthesis of proteins in the cell. The small ribosomal subunit (SSU) binds messenger RNAs (mRNAs) and translates the encoded message by selecting cognate aminoacyl-transfer RNA (tRNA) molecules. The large subunit (LSU) contains the ribosomal catalytic site termed the peptidyl transferase center (PTC), which catalyzes the formation of peptide bonds, thereby polymerizing the amino acids delivered by tRNAs into a polypeptide chain. The nascent polypeptides leave the ribosome through a tunnel in the LSU and interact with protein factors that function in enzymatic processing, targeting, and the membrane insertion of nascent chains at the exit of the ribosomal tunnel. This Candida albicans (strain SC5314 / ATCC MYA-2876) (Yeast) protein is Large ribosomal subunit protein eL22.